A 172-amino-acid polypeptide reads, in one-letter code: 3-hydroxydecanoyl-[acyl-carrier-protein] dehydratase (172 aa).

Residue H71 is part of the active site.

It belongs to the thioester dehydratase family. FabA subfamily. Homodimer.

Its subcellular location is the cytoplasm. It catalyses the reaction a (3R)-hydroxyacyl-[ACP] = a (2E)-enoyl-[ACP] + H2O. It carries out the reaction (3R)-hydroxydecanoyl-[ACP] = (2E)-decenoyl-[ACP] + H2O. The catalysed reaction is (2E)-decenoyl-[ACP] = (3Z)-decenoyl-[ACP]. The protein operates within lipid metabolism; fatty acid biosynthesis. Necessary for the introduction of cis unsaturation into fatty acids. Catalyzes the dehydration of (3R)-3-hydroxydecanoyl-ACP to E-(2)-decenoyl-ACP and then its isomerization to Z-(3)-decenoyl-ACP. Can catalyze the dehydratase reaction for beta-hydroxyacyl-ACPs with saturated chain lengths up to 16:0, being most active on intermediate chain length. This chain is 3-hydroxydecanoyl-[acyl-carrier-protein] dehydratase, found in Escherichia coli O6:K15:H31 (strain 536 / UPEC).